The chain runs to 375 residues: E3 ubiquitin-protein ligase FANCL (375 aa).

A2 is subject to N-acetylalanine. Residues L104–A294 are UBC-RWD region (URD). Zn(2+)-binding residues include C307, C310, C324, C329, H334, C337, C359, and C362. An RING-type; degenerate zinc finger spans residues C307 to S363.

In terms of assembly, interacts with GGN. Belongs to the multisubunit FA complex composed of FANCA, FANCB, FANCC, FANCE, FANCF, FANCG, FANCL/PHF9 and FANCM. The complex is not found in FA patients. In complex with FANCF, FANCA and FANCG, but not with FANCC, nor FANCE, interacts with HES1; this interaction may be essential for the stability and nuclear localization of FA core complex proteins. Interacts with FANCI. Directly interacts (via the RING-type zinc finger) with UBE2T and UBE2W. In terms of processing, the RING-type zinc finger domain is monoubiquitinated in the presence of UBE2T and UBE2W.

It is found in the cytoplasm. The protein resides in the nucleus. The catalysed reaction is S-ubiquitinyl-[E2 ubiquitin-conjugating enzyme]-L-cysteine + [acceptor protein]-L-lysine = [E2 ubiquitin-conjugating enzyme]-L-cysteine + N(6)-ubiquitinyl-[acceptor protein]-L-lysine.. The protein operates within protein modification; protein ubiquitination. In terms of biological role, ubiquitin ligase protein that mediates monoubiquitination of FANCD2 in the presence of UBE2T, a key step in the DNA damage pathway. Also mediates monoubiquitination of FANCI. May stimulate the ubiquitin release from UBE2W. May be required for proper primordial germ cell proliferation in the embryonic stage, whereas it is probably not needed for spermatogonial proliferation after birth. The chain is E3 ubiquitin-protein ligase FANCL (FANCL) from Homo sapiens (Human).